The primary structure comprises 197 residues: FMN-dependent NADH:quinone oxidoreductase (197 aa).

Residues Ser10, 16–18, 93–96, and 137–140 each bind FMN; these read SQS, MYNF, and TRGG.

Belongs to the azoreductase type 1 family. Homodimer. Requires FMN as cofactor.

The catalysed reaction is 2 a quinone + NADH + H(+) = 2 a 1,4-benzosemiquinone + NAD(+). It carries out the reaction N,N-dimethyl-1,4-phenylenediamine + anthranilate + 2 NAD(+) = 2-(4-dimethylaminophenyl)diazenylbenzoate + 2 NADH + 2 H(+). In terms of biological role, quinone reductase that provides resistance to thiol-specific stress caused by electrophilic quinones. Functionally, also exhibits azoreductase activity. Catalyzes the reductive cleavage of the azo bond in aromatic azo compounds to the corresponding amines. This Shewanella denitrificans (strain OS217 / ATCC BAA-1090 / DSM 15013) protein is FMN-dependent NADH:quinone oxidoreductase.